Reading from the N-terminus, the 56-residue chain is Large ribosomal subunit protein bL33 (56 aa).

The protein belongs to the bacterial ribosomal protein bL33 family.

This is Large ribosomal subunit protein bL33 from Actinobacillus pleuropneumoniae serotype 5b (strain L20).